The primary structure comprises 143 residues: Flagellar assembly factor FliW (143 aa).

Belongs to the FliW family. As to quaternary structure, interacts with translational regulator CsrA and flagellin(s).

Its subcellular location is the cytoplasm. Acts as an anti-CsrA protein, binds CsrA and prevents it from repressing translation of its target genes, one of which is flagellin. Binds to flagellin and participates in the assembly of the flagellum. The sequence is that of Flagellar assembly factor FliW from Clostridium botulinum (strain 657 / Type Ba4).